The sequence spans 118 residues: Non-specific lipid-transfer protein 2 (118 aa).

The signal sequence occupies residues 1-25 (MAGVMKLACMVLACMIVAGPITANA). Intrachain disulfides connect Cys29-Cys76, Cys39-Cys53, Cys54-Cys100, and Cys74-Cys114.

It belongs to the plant LTP family.

In terms of biological role, plant non-specific lipid-transfer proteins transfer phospholipids as well as galactolipids across membranes. May play a role in wax or cutin deposition in the cell walls of expanding epidermal cells and certain secretory tissues. In Arabidopsis thaliana (Mouse-ear cress), this protein is Non-specific lipid-transfer protein 2 (LTP2).